A 402-amino-acid polypeptide reads, in one-letter code: Tryptophan synthase beta chain (402 aa).

K91 carries the N6-(pyridoxal phosphate)lysine modification.

This sequence belongs to the TrpB family. Tetramer of two alpha and two beta chains. It depends on pyridoxal 5'-phosphate as a cofactor.

It carries out the reaction (1S,2R)-1-C-(indol-3-yl)glycerol 3-phosphate + L-serine = D-glyceraldehyde 3-phosphate + L-tryptophan + H2O. It participates in amino-acid biosynthesis; L-tryptophan biosynthesis; L-tryptophan from chorismate: step 5/5. The beta subunit is responsible for the synthesis of L-tryptophan from indole and L-serine. The chain is Tryptophan synthase beta chain from Streptococcus thermophilus (strain ATCC BAA-491 / LMD-9).